The chain runs to 239 residues: MMDLFETNAYFFNDLRYLEGDHGTLDMPGVSPLYEGNDSPLSPGQDPVPSETGCESSGEEHVLAPPGLQAHCEGQCLMWACKICKRKSAPTDRRKAATLRERRRLKKINEAFDALKKKTVPNPNQRLPKVEILRSAINYIEKLQDLLHSLDEQEQSNDTDPYTYNLKENHVTPSEYHWKKTCQSWQENPDHSSSQMAGHREGAVLESSESSSLRRLSSIVDSISTEEPKARCPSQISEK.

The disordered stretch occupies residues 28–59 (PGVSPLYEGNDSPLSPGQDPVPSETGCESSGE). One can recognise a bHLH domain in the interval 92–143 (DRRKAATLRERRRLKKINEAFDALKKKTVPNPNQRLPKVEILRSAINYIEKL). Residues 182-196 (CQSWQENPDHSSSQM) show a composition bias toward polar residues. A disordered region spans residues 182 to 239 (CQSWQENPDHSSSQMAGHREGAVLESSESSSLRRLSSIVDSISTEEPKARCPSQISEK). Residues 204 to 223 (VLESSESSSLRRLSSIVDSI) show a composition bias toward low complexity.

As to quaternary structure, efficient DNA binding requires dimerization with another bHLH protein.

It is found in the nucleus. Its function is as follows. Involved in muscle differentiation (myogenic factor). Induces fibroblasts to differentiate into myoblasts. Probable sequence specific DNA-binding protein. In Danio rerio (Zebrafish), this protein is Myogenic factor 6 (myf6).